We begin with the raw amino-acid sequence, 185 residues long: V-type ATP synthase subunit E (185 aa).

It belongs to the V-ATPase E subunit family.

Its function is as follows. Produces ATP from ADP in the presence of a proton gradient across the membrane. This chain is V-type ATP synthase subunit E, found in Deinococcus geothermalis (strain DSM 11300 / CIP 105573 / AG-3a).